The sequence spans 350 residues: Neurogenic differentiation factor 1 (350 aa).

The interval methionine 1–methionine 91 is disordered. The span at glutamate 7–serine 18 shows a compositional bias: low complexity. A compositionally biased stretch (basic and acidic residues) spans aspartate 22 to serine 38. The segment covering aspartate 44–aspartate 72 has biased composition (acidic residues). The span at proline 76–methionine 91 shows a compositional bias: basic residues. A Nuclear localization signal motif is present at residues lysine 82–lysine 88. The region spanning methionine 96–leucine 148 is the bHLH domain.

As to quaternary structure, efficient DNA binding requires dimerization with another bHLH protein. In the embryo, expressed broadly in a subset of primary neurons in the brain and spinal cord. At 28 hours post-fertilization (hpf), regions of expression include telencephalon, olfactory placode, epiphysis, cranial ganglia, acoustic ganglia, Rohon-Beard mechano-sensory neurons and motoneurons. In 2 day postembryonic brain, expressed in many brain regions but absent from subpallium, the ventral preoptic region, ventral thalamus and hypothalamus; sites of expression extend laterally from the ventricular proliferative regions and correspond to freshly determined cell populations. In adult, expressed in all tissues examined with highest levels in brain.

The protein localises to the cytoplasm. Its subcellular location is the nucleus. Functionally, may act as a transcriptional activator. Differentiation factor required for neurogenesis. Acts as an upstream activator of isl1. The chain is Neurogenic differentiation factor 1 from Danio rerio (Zebrafish).